A 101-amino-acid chain; its full sequence is Biogenesis of lysosome-related organelles complex 1 subunit BLS1 (101 aa).

It belongs to the BLOC1S1 family. As to quaternary structure, component of the biogenesis of lysosome-related organelles complex-1 (BLOC-1).

Its subcellular location is the endosome. Functionally, component of the biogenesis of lysosome-related organelles complex-1 (BLOC-1), a complex involved in endosomal cargo sorting. This chain is Biogenesis of lysosome-related organelles complex 1 subunit BLS1 (BLS1), found in Zygosaccharomyces rouxii (strain ATCC 2623 / CBS 732 / NBRC 1130 / NCYC 568 / NRRL Y-229).